The chain runs to 245 residues: Probable phosphatase YE2421 (245 aa).

Zn(2+) is bound by residues His7, His9, His15, His40, Glu73, His101, His131, Asp192, and His194.

Belongs to the PHP family. In terms of assembly, homotrimer. Zn(2+) is required as a cofactor.

This Yersinia enterocolitica serotype O:8 / biotype 1B (strain NCTC 13174 / 8081) protein is Probable phosphatase YE2421.